A 423-amino-acid polypeptide reads, in one-letter code: Gamma-glutamyl phosphate reductase (423 aa).

The protein belongs to the gamma-glutamyl phosphate reductase family.

The protein localises to the cytoplasm. It carries out the reaction L-glutamate 5-semialdehyde + phosphate + NADP(+) = L-glutamyl 5-phosphate + NADPH + H(+). It participates in amino-acid biosynthesis; L-proline biosynthesis; L-glutamate 5-semialdehyde from L-glutamate: step 2/2. Functionally, catalyzes the NADPH-dependent reduction of L-glutamate 5-phosphate into L-glutamate 5-semialdehyde and phosphate. The product spontaneously undergoes cyclization to form 1-pyrroline-5-carboxylate. This is Gamma-glutamyl phosphate reductase from Pseudomonas putida (strain GB-1).